Reading from the N-terminus, the 398-residue chain is Acetylornithine aminotransferase (398 aa).

Phenylalanine 129 lines the pyridoxal 5'-phosphate pocket. Residue arginine 132 coordinates N(2)-acetyl-L-ornithine. Aspartate 214–glutamine 217 is a binding site for pyridoxal 5'-phosphate. Lysine 243 is modified (N6-(pyridoxal phosphate)lysine). Serine 271 contributes to the N(2)-acetyl-L-ornithine binding site. Threonine 272 is a pyridoxal 5'-phosphate binding site.

It belongs to the class-III pyridoxal-phosphate-dependent aminotransferase family. ArgD subfamily. Homodimer. Requires pyridoxal 5'-phosphate as cofactor.

It localises to the cytoplasm. The enzyme catalyses N(2)-acetyl-L-ornithine + 2-oxoglutarate = N-acetyl-L-glutamate 5-semialdehyde + L-glutamate. The protein operates within amino-acid biosynthesis; L-arginine biosynthesis; N(2)-acetyl-L-ornithine from L-glutamate: step 4/4. In Neisseria meningitidis serogroup B (strain ATCC BAA-335 / MC58), this protein is Acetylornithine aminotransferase.